The primary structure comprises 330 residues: Aspartate--ammonia ligase (330 aa).

The protein belongs to the class-II aminoacyl-tRNA synthetase family. AsnA subfamily.

Its subcellular location is the cytoplasm. The enzyme catalyses L-aspartate + NH4(+) + ATP = L-asparagine + AMP + diphosphate + H(+). Its pathway is amino-acid biosynthesis; L-asparagine biosynthesis; L-asparagine from L-aspartate (ammonia route): step 1/1. This chain is Aspartate--ammonia ligase, found in Escherichia coli O7:K1 (strain IAI39 / ExPEC).